Reading from the N-terminus, the 179-residue chain is Large ribosomal subunit protein uL5 (179 aa).

It belongs to the universal ribosomal protein uL5 family. As to quaternary structure, part of the 50S ribosomal subunit; part of the 5S rRNA/L5/L18/L25 subcomplex. Contacts the 5S rRNA and the P site tRNA. Forms a bridge to the 30S subunit in the 70S ribosome.

This is one of the proteins that bind and probably mediate the attachment of the 5S RNA into the large ribosomal subunit, where it forms part of the central protuberance. In the 70S ribosome it contacts protein S13 of the 30S subunit (bridge B1b), connecting the 2 subunits; this bridge is implicated in subunit movement. Contacts the P site tRNA; the 5S rRNA and some of its associated proteins might help stabilize positioning of ribosome-bound tRNAs. The chain is Large ribosomal subunit protein uL5 from Francisella tularensis subsp. tularensis (strain SCHU S4 / Schu 4).